The chain runs to 214 residues: Large ribosomal subunit protein uL16 (214 aa).

The protein belongs to the universal ribosomal protein uL16 family. As to quaternary structure, component of the large ribosomal subunit. Mature ribosomes consist of a small (40S) and a large (60S) subunit. The 40S subunit contains about 33 different proteins and 1 molecule of RNA (18S). The 60S subunit contains about 49 different proteins and 3 molecules of RNA (28S, 5.8S and 5S).

The polypeptide is Large ribosomal subunit protein uL16 (rpl-10L) (Caenorhabditis elegans).